The following is a 121-amino-acid chain: Prefoldin subunit beta (121 aa).

Belongs to the prefoldin subunit beta family. As to quaternary structure, heterohexamer of two alpha and four beta subunits.

Its subcellular location is the cytoplasm. Molecular chaperone capable of stabilizing a range of proteins. Seems to fulfill an ATP-independent, HSP70-like function in archaeal de novo protein folding. The chain is Prefoldin subunit beta from Methanoculleus marisnigri (strain ATCC 35101 / DSM 1498 / JR1).